Here is a 323-residue protein sequence, read N- to C-terminus: Prenyl transferase (323 aa).

The isopentenyl diphosphate site is built by K46, R49, and H81. Mg(2+) contacts are provided by D88 and D92. An all-trans-polyprenyl diphosphate is bound at residue R97. R98 lines the isopentenyl diphosphate pocket. 3 residues coordinate an all-trans-polyprenyl diphosphate: K174, T175, and Q212.

It belongs to the FPP/GGPP synthase family. Mg(2+) serves as cofactor.

Its function is as follows. Possible role in synthesis of the nonaprenyl side chain of plastoquinone or in synthesis of other prenyl chains such as undekaprenyl pyrophosphate. This chain is Prenyl transferase (preA), found in Synechocystis sp. (strain ATCC 27184 / PCC 6803 / Kazusa).